The sequence spans 198 residues: Cyclin-dependent kinase inhibitor 1B (198 aa).

Positions 1-11 (MSNVRVSNGSP) are enriched in polar residues. The tract at residues 1-22 (MSNVRVSNGSPSLERMDARQAE) is disordered. At Ser10 the chain carries Phosphoserine; by UHMK1. The interaction with CDK2 stretch occupies residues 51–91 (DMEEASQRKWNFDFQNHKPLEGKYEWQEVEKGSLPEFYYRP). Phosphotyrosine; by SRC is present on Tyr74. The disordered stretch occupies residues 87 to 198 (FYYRPPRPPK…KKPGLRRRQT (112 aa)). Position 88 is a phosphotyrosine; by ABL, LYN and SRC (Tyr88). Tyr89 carries the phosphotyrosine modification. A compositionally biased stretch (polar residues) spans 104–113 (QESQDVSGNR). A compositionally biased stretch (basic and acidic residues) spans 126 to 137 (EDTHLVDQKTDT). The Nuclear localization signal motif lies at 153 to 169 (KRPATDDSSPQNKRANR). Residue Thr157 is modified to Phosphothreonine; by CaMK1, PKB/AKT1 and PIM1. A Phosphothreonine modification is found at Thr170. Positions 175 to 186 (SDGSPNAGSVEQ) are enriched in polar residues. A Phosphothreonine; by PKB/AKT1, CDK1 and CDK2 modification is found at Thr187. Residue Thr198 is modified to Phosphothreonine; by CaMK1, PKB/AKT1, RPS6KA1, RPS6KA3 and PIM1.

The protein belongs to the CDI family. Forms a ternary complex composed of CCNE1, CDK2 and CDKN1B. Interacts directly with CCNE1; the interaction is inhibited by CDK2-dependent phosphorylation on Thr-187. Interacts with COPS5, subunit of the COP9 signalosome complex; the interaction leads to CDKN1B degradation. Interacts with NUP50; the interaction leads to nuclear import and degradation of phosphorylated CDKN1B. Interacts with CCND1 and SNX6. Interacts (Thr-198-phosphorylated form) with 14-3-3 proteins, binds strongly YWHAQ, weakly YWHAE and YWHAH, but not YWHAB nor YWHAZ; the interaction with YWHAQ results in translocation to the cytoplasm. Interacts with AKT1 and LYN; the interactions lead to cytoplasmic mislocation, phosphorylation of CDKN1B and inhibition of cell cycle arrest. Forms a ternary complex with CCNA2 and CDK2; CDKN1B inhibits the kinase activity of CDK2 through conformational rearrangements. Interacts (unphosphorylated form) with CDK2. Forms a complex with CDK2 and SPDYA, but does not directly interact with SPDYA. Forms a ternary complex composed of cyclin D, CDK4 and CDKN1B. Interacts (phosphorylated on Tyr-88 and Tyr-89) with CDK4; the interaction is required for cyclin D and CDK4 complex assembly, induces nuclear translocation and activates the CDK4 kinase activity. Interacts with GRB2. Interacts with PIM1. Identified in a complex with SKP1, SKP2 and CKS1B. Interacts with UHMK1; the interaction leads to cytoplasmic mislocation, phosphorylation of CDKN1B and inhibition of cell cycle arrest. Also interacts with CDK1. Dephosphorylated on Thr-187 by PPM1H, leading to CDKN1B stability. In terms of processing, phosphorylated; phosphorylation occurs on serine, threonine and tyrosine residues. Phosphorylation on Ser-10 is the major site of phosphorylation in resting cells, takes place at the G(0)-G(1) phase and leads to protein stability. Phosphorylation on other sites is greatly enhanced by mitogens, growth factors, cMYC and in certain cancer cell lines. The phosphorylated form found in the cytoplasm is inactivate. Phosphorylation on Thr-198 is required for interaction with 14-3-3 proteins. Phosphorylation on Thr-187, by CDK1 and CDK2 leads to protein ubiquitination and proteasomal degradation. Tyrosine phosphorylation promotes this process. Phosphorylation by PKB/AKT1 can be suppressed by LY294002, an inhibitor of the catalytic subunit of PI3K. Phosphorylation on Tyr-88 and Tyr-89 has no effect on binding CDK2, but is required for binding CDK4. Dephosphorylated on tyrosine residues by G-CSF. Dephosphorylated on Thr-187 by PPM1H, leading to CDKN1B stability. Ubiquitinated; in the cytoplasm by the KPC complex (composed of RNF123/KPC1 and UBAC1/KPC2) and, in the nucleus, by SCF(SKP2). The latter requires prior phosphorylation on Thr-187. Ubiquitinated; by a TRIM21-containing SCF(SKP2)-like complex; leads to its degradation. Post-translationally, subject to degradation in the lysosome. Interaction with SNX6 promotes lysosomal degradation.

Its subcellular location is the nucleus. It localises to the cytoplasm. The protein localises to the endosome. Functionally, important regulator of cell cycle progression. Inhibits the kinase activity of CDK2 bound to cyclin A, but has little inhibitory activity on CDK2 bound to SPDYA. Involved in G1 arrest. Potent inhibitor of cyclin E- and cyclin A-CDK2 complexes. Forms a complex with cyclin type D-CDK4 complexes and is involved in the assembly, stability, and modulation of CCND1-CDK4 complex activation. Acts either as an inhibitor or an activator of cyclin type D-CDK4 complexes depending on its phosphorylation state and/or stoichometry. The sequence is that of Cyclin-dependent kinase inhibitor 1B (CDKN1B) from Felis catus (Cat).